Reading from the N-terminus, the 425-residue chain is Exodeoxyribonuclease 7 large subunit (425 aa).

It belongs to the XseA family. Heterooligomer composed of large and small subunits.

Its subcellular location is the cytoplasm. The enzyme catalyses Exonucleolytic cleavage in either 5'- to 3'- or 3'- to 5'-direction to yield nucleoside 5'-phosphates.. In terms of biological role, bidirectionally degrades single-stranded DNA into large acid-insoluble oligonucleotides, which are then degraded further into small acid-soluble oligonucleotides. The polypeptide is Exodeoxyribonuclease 7 large subunit (Nocardia farcinica (strain IFM 10152)).